A 555-amino-acid chain; its full sequence is Potassium-transporting ATPase potassium-binding subunit (555 aa).

The next 10 membrane-spanning stretches (helical) occupy residues 2 to 22, 60 to 80, 130 to 150, 173 to 193, 246 to 266, 278 to 298, 374 to 394, 412 to 432, 483 to 503, and 525 to 545; these read IWVA…PTGI, QYAL…YFIF, IGIT…VMAF, VFLP…VPQT, MSNI…PFTY, ILFV…TTSE, AGFV…GLMV, LIAV…ALAL, LVMF…AASL, and GIFI…MLVL.

The protein belongs to the KdpA family. As to quaternary structure, the system is composed of three essential subunits: KdpA, KdpB and KdpC.

Its subcellular location is the cell membrane. Functionally, part of the high-affinity ATP-driven potassium transport (or Kdp) system, which catalyzes the hydrolysis of ATP coupled with the electrogenic transport of potassium into the cytoplasm. This subunit binds the extracellular potassium ions and delivers the ions to the membrane domain of KdpB through an intramembrane tunnel. This is Potassium-transporting ATPase potassium-binding subunit from Bacillus anthracis (strain A0248).